Here is a 270-residue protein sequence, read N- to C-terminus: Phosphatidylglycerol--prolipoprotein diacylglyceryl transferase (270 aa).

A run of 4 helical transmembrane segments spans residues 19 to 39 (FPVY…LWLA), 56 to 76 (LVLI…VIFE), 92 to 112 (QGGL…ILFA), and 116 to 136 (GVSF…GQAI). Position 138 (arginine 138) interacts with a 1,2-diacyl-sn-glycero-3-phospho-(1'-sn-glycerol). Helical transmembrane passes span 178–198 (HPTF…LLAL), 206–226 (GELF…VEGL), and 236–256 (LRIA…FIIV).

It belongs to the Lgt family.

Its subcellular location is the cell membrane. It catalyses the reaction L-cysteinyl-[prolipoprotein] + a 1,2-diacyl-sn-glycero-3-phospho-(1'-sn-glycerol) = an S-1,2-diacyl-sn-glyceryl-L-cysteinyl-[prolipoprotein] + sn-glycerol 1-phosphate + H(+). It functions in the pathway protein modification; lipoprotein biosynthesis (diacylglyceryl transfer). In terms of biological role, catalyzes the transfer of the diacylglyceryl group from phosphatidylglycerol to the sulfhydryl group of the N-terminal cysteine of a prolipoprotein, the first step in the formation of mature lipoproteins. In Bacillus cereus (strain ZK / E33L), this protein is Phosphatidylglycerol--prolipoprotein diacylglyceryl transferase.